Consider the following 319-residue polypeptide: ATP-dependent 6-phosphofructokinase (319 aa).

Gly-11 provides a ligand contact to ATP. 21–25 contacts ADP; sequence RAVTR. ATP-binding positions include 72-73 and 102-105; these read RF and GDGS. Asp-103 is a Mg(2+) binding site. 125–127 contributes to the substrate binding site; the sequence is SID. Asp-127 acts as the Proton acceptor in catalysis. Residue Arg-154 participates in ADP binding. Substrate contacts are provided by residues Arg-162 and 169–171; that span reads MGR. ADP is bound by residues 185-187 and 213-215; these read GAD and KKH. Residues Glu-222, Arg-243, and 249 to 252 each bind substrate; that span reads HMQR.

This sequence belongs to the phosphofructokinase type A (PFKA) family. ATP-dependent PFK group I subfamily. Prokaryotic clade 'B1' sub-subfamily. As to quaternary structure, homotetramer. It depends on Mg(2+) as a cofactor.

Its subcellular location is the cytoplasm. It catalyses the reaction beta-D-fructose 6-phosphate + ATP = beta-D-fructose 1,6-bisphosphate + ADP + H(+). Its pathway is carbohydrate degradation; glycolysis; D-glyceraldehyde 3-phosphate and glycerone phosphate from D-glucose: step 3/4. With respect to regulation, allosterically activated by ADP and other diphosphonucleosides, and allosterically inhibited by phosphoenolpyruvate. Functionally, catalyzes the phosphorylation of D-fructose 6-phosphate to fructose 1,6-bisphosphate by ATP, the first committing step of glycolysis. The protein is ATP-dependent 6-phosphofructokinase of Lactobacillus johnsonii (strain CNCM I-12250 / La1 / NCC 533).